The following is a 343-amino-acid chain: Uroporphyrinogen decarboxylase (343 aa).

Residues 24-28 (RQAGR), Phe-43, Asp-74, Tyr-151, Ser-206, and His-321 each bind substrate.

This sequence belongs to the uroporphyrinogen decarboxylase family. In terms of assembly, homodimer.

The protein localises to the cytoplasm. It carries out the reaction uroporphyrinogen III + 4 H(+) = coproporphyrinogen III + 4 CO2. Its pathway is porphyrin-containing compound metabolism; protoporphyrin-IX biosynthesis; coproporphyrinogen-III from 5-aminolevulinate: step 4/4. Functionally, catalyzes the decarboxylation of four acetate groups of uroporphyrinogen-III to yield coproporphyrinogen-III. The protein is Uroporphyrinogen decarboxylase of Thermosynechococcus vestitus (strain NIES-2133 / IAM M-273 / BP-1).